Here is a 181-residue protein sequence, read N- to C-terminus: RING-H2 finger protein ATL56 (181 aa).

The segment at 1-24 is disordered; sequence MPPTNNYRISGEPPSTTPSHPPPK. A compositionally biased stretch (pro residues) spans 15–24; it reads STTPSHPPPK. The helical transmembrane segment at 32 to 52 threads the bilayer; it reads LFLVGVIMFSIFFLFLVLIGI. An RING-type; atypical zinc finger spans residues 110–152; that stretch reads CVVCFDGFRQGQWCRNLPGCGHVFHRKCVDTWLLKASTCPICR.

This sequence belongs to the RING-type zinc finger family. ATL subfamily.

It localises to the membrane. The enzyme catalyses S-ubiquitinyl-[E2 ubiquitin-conjugating enzyme]-L-cysteine + [acceptor protein]-L-lysine = [E2 ubiquitin-conjugating enzyme]-L-cysteine + N(6)-ubiquitinyl-[acceptor protein]-L-lysine.. Its pathway is protein modification; protein ubiquitination. The chain is RING-H2 finger protein ATL56 (ATL56) from Arabidopsis thaliana (Mouse-ear cress).